Consider the following 320-residue polypeptide: Acetyl-coenzyme A carboxylase carboxyl transferase subunit alpha (320 aa).

Residues 33 to 294 (AFDGEIESLR…GDAVEEELKA (262 aa)) enclose the CoA carboxyltransferase C-terminal domain.

This sequence belongs to the AccA family. As to quaternary structure, acetyl-CoA carboxylase is a heterohexamer composed of biotin carboxyl carrier protein (AccB), biotin carboxylase (AccC) and two subunits each of ACCase subunit alpha (AccA) and ACCase subunit beta (AccD).

It localises to the cytoplasm. The enzyme catalyses N(6)-carboxybiotinyl-L-lysyl-[protein] + acetyl-CoA = N(6)-biotinyl-L-lysyl-[protein] + malonyl-CoA. It participates in lipid metabolism; malonyl-CoA biosynthesis; malonyl-CoA from acetyl-CoA: step 1/1. In terms of biological role, component of the acetyl coenzyme A carboxylase (ACC) complex. First, biotin carboxylase catalyzes the carboxylation of biotin on its carrier protein (BCCP) and then the CO(2) group is transferred by the carboxyltransferase to acetyl-CoA to form malonyl-CoA. The sequence is that of Acetyl-coenzyme A carboxylase carboxyl transferase subunit alpha from Phenylobacterium zucineum (strain HLK1).